Reading from the N-terminus, the 910-residue chain is Putative coatomer subunit beta'-3 (910 aa).

WD repeat units follow at residues 13-52, 55-94, 97-136, 140-180, 183-224, 227-266, 269-309, 351-393, and 461-501; these read QRSE…MVKS, VTEL…KVKV, AHTD…MCTQ, GHSH…PNFT, GHSK…CVQT, GHAH…LENT, YGLE…ASMD, TCDL…GSAL, and RIDV…SHLD. Over residues 865 to 884 the composition is skewed to acidic residues; it reads ENGVEESQEDAVEVDVEADG. The interval 865 to 910 is disordered; the sequence is ENGVEESQEDAVEVDVEADGSTDGTVLVNGNDTEEQWGTNNEESLA. Residues 886 to 910 show a composition bias toward polar residues; it reads TDGTVLVNGNDTEEQWGTNNEESLA.

This sequence belongs to the WD repeat COPB2 family. Oligomeric complex that consists of at least the alpha, beta, beta', gamma, delta, epsilon and zeta subunits.

Its subcellular location is the cytoplasm. It is found in the golgi apparatus membrane. The protein localises to the cytoplasmic vesicle. The protein resides in the COPI-coated vesicle membrane. The coatomer is a cytosolic protein complex that binds to dilysine motifs and reversibly associates with Golgi non-clathrin-coated vesicles, which further mediate biosynthetic protein transport from the ER, via the Golgi up to the trans Golgi network. Coatomer complex is required for budding from Golgi membranes, and is essential for the retrograde Golgi-to-ER transport of dilysine-tagged proteins. The protein is Putative coatomer subunit beta'-3 of Oryza sativa subsp. japonica (Rice).